A 210-amino-acid polypeptide reads, in one-letter code: Glutathione S-transferase P 10 (210 aa).

The GST N-terminal domain maps to 2–81 (AVPQLYYFTI…HLGRVHGLNG (80 aa)). Residues Tyr8, Trp41, Lys45, 52–53 (QL), and 65–66 (QT) contribute to the glutathione site. Residues 83 to 200 (NEQEATFLDM…YLEKRKADKV (118 aa)) form the GST C-terminal domain.

It belongs to the GST superfamily. Pi family. As to quaternary structure, homodimer. As to expression, expressed in cells at the mouth and adjacent to the pharyngeal bulbs of the head and also in the tail.

The catalysed reaction is RX + glutathione = an S-substituted glutathione + a halide anion + H(+). In terms of biological role, conjugation of reduced glutathione to a wide number of exogenous and endogenous hydrophobic electrophiles. Responsible for approximately one-third of 4-hydroxy-2-nonenal conjugation. May play a role in the detoxification of reactive oxygen species produced during pathogenic bacterial infection. This Caenorhabditis elegans protein is Glutathione S-transferase P 10.